Reading from the N-terminus, the 332-residue chain is 2-oxoglutarate-dependent dioxygenase FG08081 (332 aa).

Positions Arg-176–Ala-280 constitute a Fe2OG dioxygenase domain. Residues His-201, Asp-203, and His-258 each contribute to the Fe cation site. A 2-oxoglutarate-binding site is contributed by Arg-271.

The protein belongs to the iron/ascorbate-dependent oxidoreductase family. Fe(2+) is required as a cofactor.

Its pathway is mycotoxin biosynthesis. Functionally, 2-oxoglutarate-dependent dioxygenase; part of the gene cluster that mediates the biosynthesis of butenolide, a mycotoxin that shows antibiotic activity but does not seem to play a major role in the spread of head blight in wheat. Butenolide is derived from glutamic acid via a 4-acetamido-2-butenoic acid intermediate. The predicted function of the NADH:flavin oxidoreductase FG08077, the cytochrome P450 monooxygenase FG08079, the decarboxylase FG08083, and the putative acetyltransferase FG08082 are consistent with this pathway, however, the respective activities of the butelonide biosynthesis cluster enzymes have still to be experimentally determined. This is 2-oxoglutarate-dependent dioxygenase FG08081 from Gibberella zeae (strain ATCC MYA-4620 / CBS 123657 / FGSC 9075 / NRRL 31084 / PH-1) (Wheat head blight fungus).